Here is a 118-residue protein sequence, read N- to C-terminus: Ribosome-binding factor A (118 aa).

Belongs to the RbfA family. Monomer. Binds 30S ribosomal subunits, but not 50S ribosomal subunits or 70S ribosomes.

It localises to the cytoplasm. Its function is as follows. One of several proteins that assist in the late maturation steps of the functional core of the 30S ribosomal subunit. Associates with free 30S ribosomal subunits (but not with 30S subunits that are part of 70S ribosomes or polysomes). Required for efficient processing of 16S rRNA. May interact with the 5'-terminal helix region of 16S rRNA. The protein is Ribosome-binding factor A of Clostridium beijerinckii (strain ATCC 51743 / NCIMB 8052) (Clostridium acetobutylicum).